The following is a 494-amino-acid chain: UDP-glucose 6-dehydrogenase (494 aa).

NAD(+) contacts are provided by residues glycine 11–glycine 16, aspartate 36, arginine 41, and valine 89–threonine 93. The interval serine 88–glutamate 110 is disordered. Lysine 107 carries the post-translational modification N6-acetyllysine. An allosteric switch region region spans residues lysine 129–arginine 135. Serine 130–valine 132 is a binding site for NAD(+). Residue glutamate 161 is the Proton donor/acceptor of the active site. Substrate is bound by residues glutamate 161–glutamate 165, lysine 220–asparagine 224, arginine 260, and lysine 267–glycine 273. Glutamate 165 is a binding site for NAD(+). Catalysis depends on lysine 220, which acts as the Proton donor/acceptor. Cysteine 276 functions as the Nucleophile in the catalytic mechanism. Cysteine 276 to lysine 279 lines the NAD(+) pocket. An important for formation of active hexamer structure region spans residues serine 321–threonine 325. Phenylalanine 338 to lysine 339 provides a ligand contact to substrate. NAD(+) is bound at residue arginine 346. Arginine 442 serves as a coordination point for substrate. Residues valine 466–valine 494 are disordered. Serine 476 is modified (phosphoserine).

Belongs to the UDP-glucose/GDP-mannose dehydrogenase family. In terms of assembly, homohexamer.

The enzyme catalyses UDP-alpha-D-glucose + 2 NAD(+) + H2O = UDP-alpha-D-glucuronate + 2 NADH + 3 H(+). Its pathway is nucleotide-sugar biosynthesis; UDP-alpha-D-glucuronate biosynthesis; UDP-alpha-D-glucuronate from UDP-alpha-D-glucose: step 1/1. UDP-alpha-D-xylose (UDX) acts as a feedback inhibitor. It binds at the same site as the substrate, but functions as allosteric inhibitor by triggering a conformation change that disrupts the active hexameric ring structure and gives rise to an inactive, horseshoe-shaped hexamer. Catalyzes the formation of UDP-alpha-D-glucuronate, a constituent of complex glycosaminoglycans. Required for the biosynthesis of chondroitin sulfate and heparan sulfate. Required for embryonic development via its role in the biosynthesis of glycosaminoglycans. Required for proper brain and neuronal development. This is UDP-glucose 6-dehydrogenase (UGDH) from Bos taurus (Bovine).